The chain runs to 344 residues: Glycerol-3-phosphate dehydrogenase [NAD(P)+] (344 aa).

NADPH is bound by residues W11, R31, R32, and K105. The sn-glycerol 3-phosphate site is built by K105, G133, and S135. A137 is an NADPH binding site. K188, D241, S251, R252, and N253 together coordinate sn-glycerol 3-phosphate. The Proton acceptor role is filled by K188. R252 contributes to the NADPH binding site. E278 contacts NADPH.

It belongs to the NAD-dependent glycerol-3-phosphate dehydrogenase family.

It localises to the cytoplasm. The enzyme catalyses sn-glycerol 3-phosphate + NAD(+) = dihydroxyacetone phosphate + NADH + H(+). It catalyses the reaction sn-glycerol 3-phosphate + NADP(+) = dihydroxyacetone phosphate + NADPH + H(+). The protein operates within membrane lipid metabolism; glycerophospholipid metabolism. Catalyzes the reduction of the glycolytic intermediate dihydroxyacetone phosphate (DHAP) to sn-glycerol 3-phosphate (G3P), the key precursor for phospholipid synthesis. The polypeptide is Glycerol-3-phosphate dehydrogenase [NAD(P)+] (Acidithiobacillus ferrooxidans (strain ATCC 23270 / DSM 14882 / CIP 104768 / NCIMB 8455) (Ferrobacillus ferrooxidans (strain ATCC 23270))).